A 169-amino-acid polypeptide reads, in one-letter code: Der GTPase-activating protein YihI (169 aa).

Disordered stretches follow at residues 1–99 and 146–169; these read MKPS…QAEL and SYDDDEEEEEDEKQEDMMRLLRGN. Basic residues predominate over residues 10–19; the sequence is SKGHAKARRK. Residues 20-30 show a composition bias toward basic and acidic residues; that stretch reads TREELDQEARD. Residues 31–40 are compositionally biased toward basic residues; the sequence is RKRQKKRRGH. The span at 49-58 shows a compositional bias: polar residues; sequence GNTTSGSKGQ. Acidic residues predominate over residues 147 to 159; that stretch reads YDDDEEEEEDEKQ. Positions 160-169 are enriched in basic and acidic residues; sequence EDMMRLLRGN.

This sequence belongs to the YihI family. Interacts with Der.

A GTPase-activating protein (GAP) that modifies Der/EngA GTPase function. May play a role in ribosome biogenesis. The polypeptide is Der GTPase-activating protein YihI (Escherichia coli O45:K1 (strain S88 / ExPEC)).